The chain runs to 425 residues: Histidine--tRNA ligase (425 aa).

This sequence belongs to the class-II aminoacyl-tRNA synthetase family. As to quaternary structure, homodimer.

It is found in the cytoplasm. It catalyses the reaction tRNA(His) + L-histidine + ATP = L-histidyl-tRNA(His) + AMP + diphosphate + H(+). This chain is Histidine--tRNA ligase, found in Streptomyces coelicolor (strain ATCC BAA-471 / A3(2) / M145).